A 302-amino-acid chain; its full sequence is MSAKLIKGTDIREEILEEVTKEVAELKEKTGKVPGLVTILVGENPASVSYVTLKIKTAHRVGFTEIQDNQSPDISEEDLLALIDKYNNDDSINGILVQLPLPKHIDDKKILNAIDPDKDVDGFHPVNVGRLMIGGDEVKFAPCTPAGIQEMIVRAGVETSGAEVVVVGRSNIVGKPIANMMVQKGPGANSTVTIVHTRTKDLAAHCQRADILIVAAGVPGLVKPEWIKKGACVIDVGVNRVGTKISEKTGKEIAVLRGDVDFDAAKEIAGSITPVPGGVGPMTITMLMVNTLKSFKFANGLM.

Residues 168-170, Thr-197, and Val-238 each bind NADP(+); that span reads GRS.

Belongs to the tetrahydrofolate dehydrogenase/cyclohydrolase family. In terms of assembly, homodimer.

The catalysed reaction is (6R)-5,10-methylene-5,6,7,8-tetrahydrofolate + NADP(+) = (6R)-5,10-methenyltetrahydrofolate + NADPH. The enzyme catalyses (6R)-5,10-methenyltetrahydrofolate + H2O = (6R)-10-formyltetrahydrofolate + H(+). It functions in the pathway one-carbon metabolism; tetrahydrofolate interconversion. Its function is as follows. Catalyzes the oxidation of 5,10-methylenetetrahydrofolate to 5,10-methenyltetrahydrofolate and then the hydrolysis of 5,10-methenyltetrahydrofolate to 10-formyltetrahydrofolate. The sequence is that of Bifunctional protein FolD from Desulfatibacillum aliphaticivorans.